A 564-amino-acid chain; its full sequence is Dihydropyrimidinase-related protein 5 (564 aa).

A phosphothreonine mark is found at threonine 509 and threonine 514. Phosphoserine is present on residues serine 532 and serine 538. Omega-N-methylarginine is present on arginine 559.

This sequence belongs to the metallo-dependent hydrolases superfamily. Hydantoinase/dihydropyrimidinase family. Homotetramer, and heterotetramer with other DPYS-like proteins. Interacts with DPYSL2, DPYSL3 and DPYSL4. Interacts with MAP2 and TUBB3.

The protein resides in the cytoplasm. Involved in the negative regulation of dendrite outgrowth. The sequence is that of Dihydropyrimidinase-related protein 5 (DPYSL5) from Homo sapiens (Human).